A 416-amino-acid polypeptide reads, in one-letter code: Enolase (416 aa).

Residue glutamine 160 coordinates (2R)-2-phosphoglycerate. Glutamate 204 acts as the Proton donor in catalysis. 3 residues coordinate Mg(2+): aspartate 239, glutamate 280, and aspartate 306. Residues lysine 331, arginine 360, serine 361, and lysine 382 each contribute to the (2R)-2-phosphoglycerate site. The Proton acceptor role is filled by lysine 331.

This sequence belongs to the enolase family. Requires Mg(2+) as cofactor.

Its subcellular location is the cytoplasm. It localises to the secreted. The protein resides in the cell surface. It carries out the reaction (2R)-2-phosphoglycerate = phosphoenolpyruvate + H2O. It functions in the pathway carbohydrate degradation; glycolysis; pyruvate from D-glyceraldehyde 3-phosphate: step 4/5. Functionally, catalyzes the reversible conversion of 2-phosphoglycerate (2-PG) into phosphoenolpyruvate (PEP). It is essential for the degradation of carbohydrates via glycolysis. The chain is Enolase from Sulfurisphaera tokodaii (strain DSM 16993 / JCM 10545 / NBRC 100140 / 7) (Sulfolobus tokodaii).